The primary structure comprises 207 residues: MARYIGPKAKLSRREGTDLFLKSARRSLADKCKLDSKPGQHGRTSGARTSDYGTQLREKQKVKRIYGVLERQFRRYFAEADRRKGNTGENLLQLLESRLDNVVYRMGFGSTRAEARQLVSHKSITVNGVVANVPSQQVKAGDVIAIREKAKKQARIIEALSLAEQGGMPSWVAVDAKKFEGTFKQMPERADIAGDINESLIVELYSR.

The disordered stretch occupies residues 31-55 (KCKLDSKPGQHGRTSGARTSDYGTQ). The span at 42 to 53 (GRTSGARTSDYG) shows a compositional bias: polar residues. Residues 97–160 (SRLDNVVYRM…KKQARIIEAL (64 aa)) enclose the S4 RNA-binding domain.

This sequence belongs to the universal ribosomal protein uS4 family. In terms of assembly, part of the 30S ribosomal subunit. Contacts protein S5. The interaction surface between S4 and S5 is involved in control of translational fidelity.

Its function is as follows. One of the primary rRNA binding proteins, it binds directly to 16S rRNA where it nucleates assembly of the body of the 30S subunit. With S5 and S12 plays an important role in translational accuracy. The chain is Small ribosomal subunit protein uS4 from Burkholderia vietnamiensis (strain G4 / LMG 22486) (Burkholderia cepacia (strain R1808)).